The chain runs to 78 residues: Translational regulator CsrA (78 aa).

It belongs to the CsrA/RsmA family. Homodimer; the beta-strands of each monomer intercalate to form a hydrophobic core, while the alpha-helices form wings that extend away from the core.

It is found in the cytoplasm. In terms of biological role, a translational regulator that binds mRNA to regulate translation initiation and/or mRNA stability. Usually binds in the 5'-UTR at or near the Shine-Dalgarno sequence preventing ribosome-binding, thus repressing translation. Its main target seems to be the major flagellin gene, while its function is anatagonized by FliW. The chain is Translational regulator CsrA from Nitratidesulfovibrio vulgaris (strain ATCC 29579 / DSM 644 / CCUG 34227 / NCIMB 8303 / VKM B-1760 / Hildenborough) (Desulfovibrio vulgaris).